Consider the following 238-residue polypeptide: Protein shisa-3 homolog (238 aa).

The N-terminal stretch at 1–21 (MRALLALCLLLGWLRWGPAGA) is a signal peptide. At 22 to 98 (QQSGEYCHGW…GITAQPVYVP (77 aa)) the chain is on the lumenal side. The chain crosses the membrane as a helical span at residues 99–119 (FLIVGSIFIAFIILGSVVAIY). Residues 120 to 238 (CCTCLRPKEP…GKSCPDFSSS (119 aa)) lie on the Cytoplasmic side of the membrane. The interval 151 to 173 (TSTSPRAPSRQSSTATSSSSTGG) is disordered. Residues 159–173 (SRQSSTATSSSSTGG) show a composition bias toward low complexity.

The protein belongs to the shisa family.

It localises to the endoplasmic reticulum membrane. In terms of biological role, plays an essential role in the maturation of presomitic mesoderm cells by individual attenuation of both FGF and WNT signaling. The sequence is that of Protein shisa-3 homolog (SHISA3) from Homo sapiens (Human).